Consider the following 360-residue polypeptide: 3-dehydroquinate synthase (360 aa).

Residues 70–75 (DGEKYK), 104–108 (GVIGD), 128–129 (TT), Lys-141, and Lys-150 each bind NAD(+). Zn(2+) is bound by residues Glu-183, His-246, and His-263.

It belongs to the sugar phosphate cyclases superfamily. Dehydroquinate synthase family. Co(2+) is required as a cofactor. Requires Zn(2+) as cofactor. It depends on NAD(+) as a cofactor.

The protein localises to the cytoplasm. The enzyme catalyses 7-phospho-2-dehydro-3-deoxy-D-arabino-heptonate = 3-dehydroquinate + phosphate. The protein operates within metabolic intermediate biosynthesis; chorismate biosynthesis; chorismate from D-erythrose 4-phosphate and phosphoenolpyruvate: step 2/7. Its function is as follows. Catalyzes the conversion of 3-deoxy-D-arabino-heptulosonate 7-phosphate (DAHP) to dehydroquinate (DHQ). The protein is 3-dehydroquinate synthase of Acinetobacter baumannii (strain AYE).